Reading from the N-terminus, the 590-residue chain is Arginine--tRNA ligase (590 aa).

The short motif at 138-148 (ANPTGPLHIGH) is the 'HIGH' region element.

This sequence belongs to the class-I aminoacyl-tRNA synthetase family. In terms of assembly, monomer.

The protein resides in the cytoplasm. The catalysed reaction is tRNA(Arg) + L-arginine + ATP = L-arginyl-tRNA(Arg) + AMP + diphosphate. This chain is Arginine--tRNA ligase, found in Orientia tsutsugamushi (strain Boryong) (Rickettsia tsutsugamushi).